Reading from the N-terminus, the 5101-residue chain is Malformin synthetase mlfA (5101 aa).

An adenylation 1 region spans residues 225 to 616; sequence ERHAANRPHS…CGRADTQVKL (392 aa). Residues 757–830 form the Carrier 1 domain; that stretch reads SRLEQKIQLA…EAASLAEVQE (74 aa). Residue Ser-791 is modified to O-(pantetheine 4'-phosphoryl)serine. A condensation 1 region spans residues 868-1299; that stretch reads EDVFPCTTMQ…ALNTLSLLQA (432 aa). The interval 1327–1716 is adenylation 2; it reads DRWVTRQPEG…GRKDTQVKLR (390 aa). The 78-residue stretch at 1854-1931 folds into the Carrier 2 domain; the sequence is TPTLELERTL…QLAAEVGEPA (78 aa). The residue at position 1891 (Ser-1891) is an O-(pantetheine 4'-phosphoryl)serine. 2 disordered regions span residues 1932 to 1961 and 1994 to 2020; these read GQSA…DGVD and GGSS…KKNA. Composition is skewed to low complexity over residues 1934-1958 and 1996-2013; these read SASS…STND and SSSN…SSSS. The interval 2066 to 2481 is condensation 2; that stretch reads EDIYPATALQ…AVSCSDKETL (416 aa). Positions 2504-2896 are adenylation 3; that stretch reads RRTPHAPAVC…IGRRDGQLKL (393 aa). Residues 3032-3108 form the Carrier 3 domain; that stretch reads RPVTSQEHEM…QLICHLNTIR (77 aa). Position 3069 is an O-(pantetheine 4'-phosphoryl)serine (Ser-3069). Condensation regions lie at residues 3125–3590 and 3611–4030; these read WVAL…TYDQ and NIYP…EHLV. The tract at residues 4055 to 4445 is adenylation 4; that stretch reads HNSRQAVCAW…VGRKDNQIKF (391 aa). The Carrier 4 domain maps to 4579–4655; the sequence is MPSTAAERKM…DLSDQAKSLI (77 aa). Ser-4616 bears the O-(pantetheine 4'-phosphoryl)serine mark. Positions 4712–5097 are condensation 5; sequence IVVDIPGPID…KIVGLLRHPE (386 aa).

It belongs to the NRP synthetase family.

It functions in the pathway secondary metabolite biosynthesis. In terms of biological role, nonribosomal peptide synthetase; part of the gene cluster that mediates the biosynthesis of malformins, cyclic pentapeptides with a disulfide bond between 2 consecutive cysteins, that show potential anti-tumor as well as antimalarial and antitrypanosomal properties. The nonribosomal peptide synthetase mlfA is responsible of the formation of the cyclic pentapeptide. The malformin biosynthesis clusters in malformin-producing fungi also contain enzymes involved in the formation of the disulfide bond between the two consecutive cysteins within malformins, in addition to additional tailoring enzymes such as methyltransferases or oxidoreductases. They are also composed of up to 4 major facilitator superfamily transporters, and transcription factors probably involved in the regulation of the expression of those clusters. This is Malformin synthetase mlfA from Aspergillus kawachii (strain NBRC 4308) (White koji mold).